We begin with the raw amino-acid sequence, 344 residues long: Methionine import ATP-binding protein MetN (344 aa).

The region spanning 2–241 is the ABC transporter domain; it reads IKLEKISKIF…PQTQLAKEFI (240 aa). 38-45 serves as a coordination point for ATP; it reads GASGAGKS.

This sequence belongs to the ABC transporter superfamily. Methionine importer (TC 3.A.1.24) family. In terms of assembly, the complex is composed of two ATP-binding proteins (MetN), two transmembrane proteins (MetI) and a solute-binding protein (MetQ).

It localises to the cell inner membrane. It catalyses the reaction L-methionine(out) + ATP + H2O = L-methionine(in) + ADP + phosphate + H(+). The enzyme catalyses D-methionine(out) + ATP + H2O = D-methionine(in) + ADP + phosphate + H(+). Its function is as follows. Part of the ABC transporter complex MetNIQ involved in methionine import. Responsible for energy coupling to the transport system. This is Methionine import ATP-binding protein MetN from Pasteurella multocida (strain Pm70).